We begin with the raw amino-acid sequence, 179 residues long: ADP-ribosylation factor-like protein 5A (179 aa).

Residue G2 is the site of N-myristoyl glycine attachment. GTP contacts are provided by residues 23-30 (GLDNAGKT), 66-70 (DIGGQ), 125-128 (NKQD), and A159.

It belongs to the small GTPase superfamily. Arf family.

Functionally, lacks ADP-ribosylation enhancing activity. This Bos taurus (Bovine) protein is ADP-ribosylation factor-like protein 5A (ARL5A).